The sequence spans 129 residues: Small ribosomal subunit protein uS8 (129 aa).

This sequence belongs to the universal ribosomal protein uS8 family. In terms of assembly, part of the 30S ribosomal subunit.

Functionally, one of the primary rRNA binding proteins, it binds directly to 16S rRNA central domain where it helps coordinate assembly of the platform of the 30S subunit. The polypeptide is Small ribosomal subunit protein uS8 (Methanothrix thermoacetophila (strain DSM 6194 / JCM 14653 / NBRC 101360 / PT) (Methanosaeta thermophila)).